Reading from the N-terminus, the 635-residue chain is GDP-Man:Man(3)GlcNAc(2)-PP-Dol alpha-1,2-mannosyltransferase (635 aa).

Residues 1-21 (MALQLDLPTLHDLRVVLNADF) lie on the Lumenal side of the membrane. Residues 22-42 (LAALAALLLLAVILVPLCSYI) traverse the membrane as a helical segment. Residues 43 to 231 (SLYAWSAILA…RLVDPKTWPR (189 aa)) are Cytoplasmic-facing. The segment at residues 232–252 (FTLMMQAAGSVWMAWHGISTL) is an intramembrane region (helical). Residues 253–481 (VPDVFVDTMG…MGVNAMWNEH (229 aa)) lie on the Cytoplasmic side of the membrane. Residues 482-502 (FGIVVVEYMSAGLIPVVHNSG) constitute an intramembrane region (helical). Over 503-635 (GPKCDIVVPY…GHRLTRGDFD (133 aa)) the chain is Cytoplasmic.

This sequence belongs to the glycosyltransferase group 1 family.

It localises to the endoplasmic reticulum membrane. The enzyme catalyses an alpha-D-Man-(1-&gt;3)-[alpha-D-Man-(1-&gt;6)]-beta-D-Man-(1-&gt;4)-beta-D-GlcNAc-(1-&gt;4)-alpha-D-GlcNAc-diphospho-di-trans,poly-cis-dolichol + 2 GDP-alpha-D-mannose = an alpha-D-Man-(1-&gt;2)-alpha-D-Man-(1-&gt;2)-alpha-D-Man-(1-&gt;3)-[alpha-D-Man-(1-&gt;6)]-beta-D-Man-(1-&gt;4)-beta-D-GlcNAc-(1-&gt;4)-alpha-D-GlcNAc-diphospho-di-trans,poly-cis-dolichol + 2 GDP + 2 H(+). Its pathway is protein modification; protein glycosylation. In terms of biological role, GDP-Man:Man(3)GlcNAc(2)-PP-Dol alpha-1,2-mannosyltransferase that operates in the biosynthetic pathway of dolichol-linked oligosaccharides, the glycan precursors employed in protein asparagine (N)-glycosylation. The assembly of dolichol-linked oligosaccharides begins on the cytosolic side of the endoplasmic reticulum membrane and finishes in its lumen. The sequential addition of sugars to dolichol pyrophosphate produces dolichol-linked oligosaccharides containing fourteen sugars, including two GlcNAcs, nine mannoses and three glucoses. Once assembled, the oligosaccharide is transferred from the lipid to nascent proteins by oligosaccharyltransferases. Catalyzes, on the cytoplasmic face of the endoplasmic reticulum, the addition of the fourth and fifth mannose residues to the dolichol-linked oligosaccharide chain, to produce Man(5)GlcNAc(2)-PP-dolichol core oligosaccharide. The polypeptide is GDP-Man:Man(3)GlcNAc(2)-PP-Dol alpha-1,2-mannosyltransferase (ALG11) (Yarrowia lipolytica (strain CLIB 122 / E 150) (Yeast)).